We begin with the raw amino-acid sequence, 388 residues long: MIKNPKVLILTAHYGNGHVQVAKTLEQAFHQKGIEDVIVCDLFGESHPVITDITKYLYLKSYTIGKELYRLFYYGVEKIYDKKIASWYANFGRKRLKALLHTEKPDIVINTFPIIAVPELKKQTGFSIPVYNVLTDFCLHKIWIHREVDRYFVATDHVKQVMIEIGVPAERIVETGIPIRKNFELTMNSELIYNKYQLSREKKILLIVAGAHGVLGNVKDLCASFMSVPNLQVAVVCGKNDALKQELLKLQEQNSEALKVFGYIENIDELFRVTSCMITKPGGITLSEAAALQVPVILYKPVPGQENENAIYFESKGAAVVIREDAEIFEKTKALLEDDRKLLQMKEAMGSIYRPEPAAHIVDVILEENHAQTNHVPMKSPALAQSFT.

It belongs to the glycosyltransferase 28 family. UgtP subfamily.

Its subcellular location is the cell membrane. It catalyses the reaction a 1,2-diacyl-3-O-(beta-D-glucopyranosyl)-sn-glycerol + UDP-alpha-D-glucose = a 1,2-diacyl-3-O-(beta-D-Glc-(1-&gt;6)-beta-D-Glc)-sn-glycerol + UDP + H(+). The catalysed reaction is a 1,2-diacyl-3-O-(beta-D-Glc-(1-&gt;6)-beta-D-Glc)-sn-glycerol + UDP-alpha-D-glucose = a 1,2-diacyl-3-O-(beta-D-Glc-(1-&gt;6)-beta-D-Glc-(1-&gt;6)-beta-D-Glc)-sn-glycerol + UDP + H(+). It carries out the reaction a 1,2-diacyl-sn-glycerol + UDP-alpha-D-glucose = a 1,2-diacyl-3-O-(beta-D-glucopyranosyl)-sn-glycerol + UDP + H(+). It participates in glycolipid metabolism; diglucosyl-diacylglycerol biosynthesis. Functionally, processive glucosyltransferase involved in the biosynthesis of both the bilayer- and non-bilayer-forming membrane glucolipids. Is able to successively transfer up to three glucosyl residues to diacylglycerol (DAG), thereby catalyzing the formation of beta-monoglucosyl-DAG (3-O-(beta-D-glucopyranosyl)-1,2-diacyl-sn-glycerol), beta-diglucosyl-DAG (3-O-(beta-D-glucopyranosyl-beta-(1-&gt;6)-D-glucopyranosyl)-1,2-diacyl-sn-glycerol) and beta-triglucosyl-DAG (3-O-(beta-D-glucopyranosyl-beta-(1-&gt;6)-D-glucopyranosyl-beta-(1-&gt;6)-D-glucopyranosyl)-1,2-diacyl-sn-glycerol). Beta-diglucosyl-DAG is the predominant glycolipid found in Bacillales and is also used as a membrane anchor for lipoteichoic acid (LTA). This Bacillus cytotoxicus (strain DSM 22905 / CIP 110041 / 391-98 / NVH 391-98) protein is Processive diacylglycerol beta-glucosyltransferase.